A 481-amino-acid chain; its full sequence is ADAMTS-like protein 5 (481 aa).

A signal peptide spans 1–42; the sequence is MGKLRPGRVEWLASGHTERPHLFQNLLLFLWALLNCGLGVSA. The TSP type-1 domain occupies 45–97; the sequence is PGEWTPWVSWTRCSSSCGRGVSVRSRRCLRLPGEEPCWGDSHEYRLCQLPDCP. 3 cysteine pairs are disulfide-bonded: cysteine 57/cysteine 91, cysteine 61/cysteine 96, and cysteine 72/cysteine 81. N-linked (GlcNAc...) asparagine glycosylation is present at asparagine 218. Residues 331-361 form a disordered region; that stretch reads QPQPRGVEPQPPAAPAVTPAQTPTLAPDPCP. The segment covering 345–355 has biased composition (low complexity); that stretch reads PAVTPAQTPTL. Intrachain disulfides connect cysteine 360–cysteine 425, cysteine 363–cysteine 427, and cysteine 377–cysteine 479. The NTR domain occupies 360 to 479; the sequence is CPPCPDTRGR…SRIRLTARRC (120 aa).

In terms of assembly, interacts with heparin, FBN1 and FBN2. Proteolytically cleaved to release a C-terminal fragment containing the NTR domain. In terms of processing, contains at least one additional N-linked glycosylation site.

It localises to the secreted. It is found in the extracellular space. Its subcellular location is the extracellular matrix. In terms of biological role, may play a role in modulation of fibrillin microfibrils in the extracellular matrix (ECM). This is ADAMTS-like protein 5 (ADAMTSL5) from Homo sapiens (Human).